The chain runs to 136 residues: Phosphoribosyl-AMP cyclohydrolase (136 aa).

Mg(2+) is bound at residue aspartate 92. Cysteine 93 provides a ligand contact to Zn(2+). Mg(2+) contacts are provided by aspartate 94 and aspartate 96. Cysteine 109 and cysteine 116 together coordinate Zn(2+).

The protein belongs to the PRA-CH family. Homodimer. Mg(2+) serves as cofactor. It depends on Zn(2+) as a cofactor.

The protein resides in the cytoplasm. It carries out the reaction 1-(5-phospho-beta-D-ribosyl)-5'-AMP + H2O = 1-(5-phospho-beta-D-ribosyl)-5-[(5-phospho-beta-D-ribosylamino)methylideneamino]imidazole-4-carboxamide. It functions in the pathway amino-acid biosynthesis; L-histidine biosynthesis; L-histidine from 5-phospho-alpha-D-ribose 1-diphosphate: step 3/9. Reversibly inhibited by EDTA and free zinc ions. Enzyme is inactivated by dialysis against 1,10-phenanthroline, which is a zinc specific chelator. Catalyzes the hydrolysis of the adenine ring of phosphoribosyl-AMP. The protein is Phosphoribosyl-AMP cyclohydrolase of Methanococcus vannielii.